Here is a 361-residue protein sequence, read N- to C-terminus: Riboflavin biosynthesis protein RibD (361 aa).

The CMP/dCMP-type deaminase domain occupies 1–122; the sequence is MEEYYMKLAL…MMKEAGIEVR (122 aa). Residues 1–144 form a deaminase region; the sequence is MEEYYMKLAL…EKFLHFMRTG (144 aa). His-49 is a binding site for Zn(2+). The active-site Proton donor is Glu-51. Positions 74 and 83 each coordinate Zn(2+). Residues 145–361 are reductase; sequence LPYVTLKAAA…IKLTAKPTKE (217 aa). NADP(+) is bound at residue Ala-153. Position 167 (Ser-167) interacts with substrate. Residue Trp-169 coordinates NADP(+). Arg-183 serves as a coordination point for substrate. NADP(+)-binding residues include Thr-195 and Asp-199. Leu-203 and Arg-206 together coordinate substrate. Thr-221 is a binding site for NADP(+). Residue Glu-290 participates in substrate binding. 292–298 provides a ligand contact to NADP(+); the sequence is GSAVHGS.

This sequence in the N-terminal section; belongs to the cytidine and deoxycytidylate deaminase family. It in the C-terminal section; belongs to the HTP reductase family. Homotetramer. The cofactor is Zn(2+).

The enzyme catalyses 2,5-diamino-6-hydroxy-4-(5-phosphoribosylamino)-pyrimidine + H2O + H(+) = 5-amino-6-(5-phospho-D-ribosylamino)uracil + NH4(+). It catalyses the reaction 5-amino-6-(5-phospho-D-ribitylamino)uracil + NADP(+) = 5-amino-6-(5-phospho-D-ribosylamino)uracil + NADPH + H(+). The protein operates within cofactor biosynthesis; riboflavin biosynthesis; 5-amino-6-(D-ribitylamino)uracil from GTP: step 2/4. It participates in cofactor biosynthesis; riboflavin biosynthesis; 5-amino-6-(D-ribitylamino)uracil from GTP: step 3/4. Its function is as follows. Converts 2,5-diamino-6-(ribosylamino)-4(3h)-pyrimidinone 5'-phosphate into 5-amino-6-(ribosylamino)-2,4(1h,3h)-pyrimidinedione 5'-phosphate. The polypeptide is Riboflavin biosynthesis protein RibD (ribD) (Bacillus subtilis (strain 168)).